Reading from the N-terminus, the 449-residue chain is Protein trichome birefringence-like 35 (449 aa).

A helical; Signal-anchor for type II membrane protein transmembrane segment spans residues 12–29; that stretch reads LPLAGLLFILVVTFMILF. The GDS motif motif lies at 185–187; that stretch reads GDS. Positions 428–442 match the DCXHWCLPGXXDXWN motif motif; that stretch reads DCTHWCVPGVPDVWN.

This sequence belongs to the PC-esterase family. TBL subfamily.

Its subcellular location is the membrane. Functionally, may act as a bridging protein that binds pectin and other cell wall polysaccharides. Probably involved in maintaining esterification of pectins. May be involved in the specific O-acetylation of cell wall polymers. This is Protein trichome birefringence-like 35 (TBL35) from Arabidopsis thaliana (Mouse-ear cress).